The primary structure comprises 878 residues: Alanine--tRNA ligase (878 aa).

Residues His-565, His-569, Cys-667, and His-671 each coordinate Zn(2+).

It belongs to the class-II aminoacyl-tRNA synthetase family. Zn(2+) serves as cofactor.

It localises to the cytoplasm. The catalysed reaction is tRNA(Ala) + L-alanine + ATP = L-alanyl-tRNA(Ala) + AMP + diphosphate. Catalyzes the attachment of alanine to tRNA(Ala) in a two-step reaction: alanine is first activated by ATP to form Ala-AMP and then transferred to the acceptor end of tRNA(Ala). Also edits incorrectly charged Ser-tRNA(Ala) and Gly-tRNA(Ala) via its editing domain. The protein is Alanine--tRNA ligase of Desulforamulus reducens (strain ATCC BAA-1160 / DSM 100696 / MI-1) (Desulfotomaculum reducens).